The following is a 401-amino-acid chain: Heparan-sulfate 6-O-sulfotransferase 1 (401 aa).

Topologically, residues 1 to 4 (MVER) are cytoplasmic. Residues 5–27 (ASKFVLVVAGSACFMLILYQYAG) form a helical; Signal-anchor for type II membrane protein membrane-spanning segment. The Lumenal portion of the chain corresponds to 28 to 401 (PGLSLGAPGG…DYMSHIIEKW (374 aa)). 83–91 (HIQKTGGTT) contacts 3'-phosphoadenylyl sulfate. Substrate-binding positions include 113 to 114 (KK), arginine 130, tryptophan 135, and histidine 140. The active-site Proton acceptor is histidine 140. 3'-phosphoadenylyl sulfate is bound by residues arginine 175 and serine 183. 2 residues coordinate substrate: histidine 187 and tryptophan 194. N-linked (GlcNAc...) asparagine glycosylation occurs at asparagine 254. Residue 307-309 (MQY) participates in 3'-phosphoadenylyl sulfate binding. Asparagine 310 carries an N-linked (GlcNAc...) asparagine glycan. Residue 313–314 (RA) coordinates 3'-phosphoadenylyl sulfate. The interval 367–389 (ERLLHRSKEALPREDTEEPGRVP) is disordered.

It belongs to the sulfotransferase 6 family. Post-translationally, N-glycosylated.

The protein localises to the membrane. It catalyses the reaction alpha-D-glucosaminyl-[heparan sulfate](n) + 3'-phosphoadenylyl sulfate = 6-sulfo-alpha-D-glucosaminyl-[heparan sulfate](n) + adenosine 3',5'-bisphosphate + H(+). With respect to regulation, inhibited by dithiothreitol and stimulated by protamine. Its function is as follows. 6-O-sulfation enzyme which catalyzes the transfer of sulfate from 3'-phosphoadenosine 5'-phosphosulfate (PAPS) to position 6 of the N-sulfoglucosamine residue (GlcNS) of heparan sulfate. Also transfers sulfate to CDSNS-heparin and performs the crucial step modification in the biosynthesis of anticoagulant heparan sulfate (HSact). Critical for normal neuronal development where it may play a role in neuron branching. May also play a role in limb development. May prefer iduronic acid. The chain is Heparan-sulfate 6-O-sulfotransferase 1 from Cricetulus griseus (Chinese hamster).